The primary structure comprises 319 residues: ATP-dependent 6-phosphofructokinase (319 aa).

An ATP-binding site is contributed by Gly11. Arg21–Arg25 provides a ligand contact to ADP. ATP contacts are provided by residues Arg72–Cys73 and Gly102–Ser105. Asn103 lines the Mg(2+) pocket. Thr125–Asp127 contacts substrate. Catalysis depends on Asp127, which acts as the Proton acceptor. Position 154 (Arg154) interacts with ADP. Residues Arg162 and Met169–Arg171 each bind substrate. ADP is bound by residues Gly185 to Glu187, Arg211, and Lys213 to His215. Residues Glu222, Arg243, and His249–Arg252 contribute to the substrate site.

The protein belongs to the phosphofructokinase type A (PFKA) family. ATP-dependent PFK group I subfamily. Prokaryotic clade 'B1' sub-subfamily. In terms of assembly, homotetramer. The cofactor is Mg(2+).

It is found in the cytoplasm. It carries out the reaction beta-D-fructose 6-phosphate + ATP = beta-D-fructose 1,6-bisphosphate + ADP + H(+). It functions in the pathway carbohydrate degradation; glycolysis; D-glyceraldehyde 3-phosphate and glycerone phosphate from D-glucose: step 3/4. With respect to regulation, allosterically activated by ADP and other diphosphonucleosides, and allosterically inhibited by phosphoenolpyruvate. In terms of biological role, catalyzes the phosphorylation of D-fructose 6-phosphate to fructose 1,6-bisphosphate by ATP, the first committing step of glycolysis. This Clostridium acetobutylicum (strain ATCC 824 / DSM 792 / JCM 1419 / IAM 19013 / LMG 5710 / NBRC 13948 / NRRL B-527 / VKM B-1787 / 2291 / W) protein is ATP-dependent 6-phosphofructokinase.